Here is a 504-residue protein sequence, read N- to C-terminus: Maturase K (504 aa).

Belongs to the intron maturase 2 family. MatK subfamily.

Its subcellular location is the plastid. The protein localises to the chloroplast. In terms of biological role, usually encoded in the trnK tRNA gene intron. Probably assists in splicing its own and other chloroplast group II introns. This chain is Maturase K, found in Nepenthes distillatoria (Pitcher plant).